The chain runs to 280 residues: MDIKINDITLGNNSPFVLFGGINVLEDLDSTLQTCAHYVEVTRKLGIPYIFKASFDKANRSSIHSYRGVGLEEGLKIFEKVKAEFGIPVITDVHEPHQCQPVAEVCDVIQLPAFLARQTDLVAAMAETGNVINIKKPQFLSPSQMKNIVEKFREAGNGKLILCERGSSFGYDNLVVDMLGFGVMKQTCGNLPVIFDVTHSLQTRDAGSAASGGRRAQALDLALAGMATRLAGLFLESHPDPKLAKCDGPSALPLHLLENFLIRIKALDDLIKSQPILTIE.

It belongs to the KdsA family.

The protein resides in the cytoplasm. It carries out the reaction D-arabinose 5-phosphate + phosphoenolpyruvate + H2O = 3-deoxy-alpha-D-manno-2-octulosonate-8-phosphate + phosphate. It functions in the pathway carbohydrate biosynthesis; 3-deoxy-D-manno-octulosonate biosynthesis; 3-deoxy-D-manno-octulosonate from D-ribulose 5-phosphate: step 2/3. The protein operates within bacterial outer membrane biogenesis; lipopolysaccharide biosynthesis. The protein is 2-dehydro-3-deoxyphosphooctonate aldolase of Neisseria gonorrhoeae (strain NCCP11945).